We begin with the raw amino-acid sequence, 863 residues long: MSESHVKISRTIIRGTSPSTVRLESRVRELEDLLDLERDARVRAERNANEMSIQLDTMAERLDELSGTSSQTHDAIRRKDMEISKLRKDLENANAAFETAEATLRRKHNTMISEISSEVENLQKQKGRAEKDKSQLMLEIDNVLGQLDGALKAKASAESKLEGLDSQLTRLKALTDDLQRQMADANSAKSRLAAENFELVRANQEYEAQVVTFSKTKAALESQLDDLKRAMDEDARNRLNLQTQLSSLQMDYDNLQARYEEEAEAAGNLRNQVAKFNADMAALKTRLERELMAKTEEFEELKRKLTVRITELEDMAEHERTRANNLEKTKVKLTLEIKDLQAENEALAAENGELTHRVKQAENLANELQRRIDEMTVEINTLNSANSALEADNMRLKGQVGDLTDRIANLDRENRQLGDQLKETKSALRDANRRLTDLEALRSQLEAERDNLASALHDAEEALKEMEAKYVASQNALNHLKSEMEQRLREKDEELENLRKSTTRTIEELTTTISEMEVRFKSDMSRLKKKYEATISELEVQLDVANKANANLNRENKTLAQRVQELQAALEDERRAREAAESNLQVSERKRIALASEVEEIRSQLELSDRARKNAESELNDANGRISELTLSVNTLTNDKRRLEGDIGVMQGDLDEAVNARKAAEDRADRLNAEVLRLADELRQEQENYXRAETLRKQLEIEIREITVKLEEAEAFATREGRRMVQKLQNRVRELEAELDGEIRRAKEAFANARKYERQFKELQTQSEDDKRMILELQDLLDKTQIKMKAYKRQLEEQEEVSQLTMSKYRKAQQQIEEAEHRADMAERTITIKRTIGGPGSRAVSVVREINSVSRGNRATSIM.

Positions 1–18 (MSESHVKISRTIIRGTSP) are nonhelical region. Residues 19–836 (STVRLESRVR…ERTITIKRTI (818 aa)) are a coiled coil. A nonhelical region region spans residues 837–863 (GGPGSRAVSVVREINSVSRGNRATSIM).

It belongs to the paramyosin family. In terms of assembly, homodimer.

The protein localises to the cytoplasm. Its subcellular location is the myofibril. Its function is as follows. Paramyosin is a major structural component of many thick filaments isolated from invertebrate muscles. This is Paramyosin (PMY) from Taenia saginata (Beef tapeworm).